Consider the following 179-residue polypeptide: Crossover junction endodeoxyribonuclease RuvC (179 aa).

Catalysis depends on residues Asp-14, Glu-74, and Asp-147. Asp-14, Glu-74, and Asp-147 together coordinate Mg(2+).

This sequence belongs to the RuvC family. As to quaternary structure, homodimer which binds Holliday junction (HJ) DNA. The HJ becomes 2-fold symmetrical on binding to RuvC with unstacked arms; it has a different conformation from HJ DNA in complex with RuvA. In the full resolvosome a probable DNA-RuvA(4)-RuvB(12)-RuvC(2) complex forms which resolves the HJ. Mg(2+) is required as a cofactor.

The protein localises to the cytoplasm. It carries out the reaction Endonucleolytic cleavage at a junction such as a reciprocal single-stranded crossover between two homologous DNA duplexes (Holliday junction).. Its function is as follows. The RuvA-RuvB-RuvC complex processes Holliday junction (HJ) DNA during genetic recombination and DNA repair. Endonuclease that resolves HJ intermediates. Cleaves cruciform DNA by making single-stranded nicks across the HJ at symmetrical positions within the homologous arms, yielding a 5'-phosphate and a 3'-hydroxyl group; requires a central core of homology in the junction. The consensus cleavage sequence is 5'-(A/T)TT(C/G)-3'. Cleavage occurs on the 3'-side of the TT dinucleotide at the point of strand exchange. HJ branch migration catalyzed by RuvA-RuvB allows RuvC to scan DNA until it finds its consensus sequence, where it cleaves and resolves the cruciform DNA. This is Crossover junction endodeoxyribonuclease RuvC from Rubrobacter xylanophilus (strain DSM 9941 / JCM 11954 / NBRC 16129 / PRD-1).